Consider the following 59-residue polypeptide: Photosystem II reaction center protein K (59 aa).

The propeptide occupies 1–22 (MLNIFSLICLNSALHSSSFFFA). The chain crosses the membrane as a helical span at residues 38 to 58 (MPVIPVLFFLLALVWQAAVSF).

It belongs to the PsbK family. PSII is composed of 1 copy each of membrane proteins PsbA, PsbB, PsbC, PsbD, PsbE, PsbF, PsbH, PsbI, PsbJ, PsbK, PsbL, PsbM, PsbT, PsbX, PsbY, PsbZ, Psb30/Ycf12, at least 3 peripheral proteins of the oxygen-evolving complex and a large number of cofactors. It forms dimeric complexes.

The protein resides in the plastid. The protein localises to the chloroplast thylakoid membrane. Functionally, one of the components of the core complex of photosystem II (PSII). PSII is a light-driven water:plastoquinone oxidoreductase that uses light energy to abstract electrons from H(2)O, generating O(2) and a proton gradient subsequently used for ATP formation. It consists of a core antenna complex that captures photons, and an electron transfer chain that converts photonic excitation into a charge separation. This chain is Photosystem II reaction center protein K, found in Calycanthus floridus var. glaucus (Eastern sweetshrub).